Reading from the N-terminus, the 432-residue chain is MTQTDSLPGVQATVQDMGERARRAARVLRSLPTGRKVQALRALAAELRAREAGILAANAQDVQAAEAAGLPAPLVDRLRLSAGALAAIARDVEAVAALPDPVGEQTDEKTLPSGIRVSQRRVPLGVLGVIYESRPNVTVDVAALALMSGNAAILRGGKETVNSNAALEDAIHAALNREGLPADAVQVIRDPDRARMLELLRLDESVDAIIPRGGAGLHRFCVENATVPVIVGGIGVVHIYLDGSFVQTPQDVQIAAALIRNAKTQKPSACNALDTLLIDRAALAALPDVVRPLLESGVEVRADAEAQAALAGAGLNVTSAQLGDYGTEFLALVASLRTVSGLDEALDFIAERGGHTDVILTRDPAQAERFVQDVDSAAVMVNVSPRFNDGGQLGLGAEVAISTQKLHARGPMGLRELTTSKWVVRGEGQVRD.

It belongs to the gamma-glutamyl phosphate reductase family.

It localises to the cytoplasm. The enzyme catalyses L-glutamate 5-semialdehyde + phosphate + NADP(+) = L-glutamyl 5-phosphate + NADPH + H(+). It participates in amino-acid biosynthesis; L-proline biosynthesis; L-glutamate 5-semialdehyde from L-glutamate: step 2/2. Functionally, catalyzes the NADPH-dependent reduction of L-glutamate 5-phosphate into L-glutamate 5-semialdehyde and phosphate. The product spontaneously undergoes cyclization to form 1-pyrroline-5-carboxylate. This is Gamma-glutamyl phosphate reductase from Deinococcus radiodurans (strain ATCC 13939 / DSM 20539 / JCM 16871 / CCUG 27074 / LMG 4051 / NBRC 15346 / NCIMB 9279 / VKM B-1422 / R1).